Here is a 155-residue protein sequence, read N- to C-terminus: SsrA-binding protein (155 aa).

Residues Thr135–Lys147 show a composition bias toward basic and acidic residues. The segment at Thr135–Arg155 is disordered.

Belongs to the SmpB family.

The protein resides in the cytoplasm. Functionally, required for rescue of stalled ribosomes mediated by trans-translation. Binds to transfer-messenger RNA (tmRNA), required for stable association of tmRNA with ribosomes. tmRNA and SmpB together mimic tRNA shape, replacing the anticodon stem-loop with SmpB. tmRNA is encoded by the ssrA gene; the 2 termini fold to resemble tRNA(Ala) and it encodes a 'tag peptide', a short internal open reading frame. During trans-translation Ala-aminoacylated tmRNA acts like a tRNA, entering the A-site of stalled ribosomes, displacing the stalled mRNA. The ribosome then switches to translate the ORF on the tmRNA; the nascent peptide is terminated with the 'tag peptide' encoded by the tmRNA and targeted for degradation. The ribosome is freed to recommence translation, which seems to be the essential function of trans-translation. This Streptococcus pyogenes serotype M3 (strain SSI-1) protein is SsrA-binding protein.